Consider the following 614-residue polypeptide: ATP-dependent RNA helicase dbp-3 (614 aa).

A disordered region spans residues 1–138 (MSSTKKHSRS…GTTTPAASTN (138 aa)). A compositionally biased stretch (basic and acidic residues) spans 9-36 (RSEGEEKDARLAKKVKTDETPVDGEVKK). Basic residues-rich tracts occupy residues 37–58 (ERKK…KSKK) and 91–109 (KKEK…KKAK). The segment covering 117–138 (EESTSASKATTNGTTTPAASTN) has biased composition (low complexity). The Q motif signature appears at 180-207 (MNFSQLPQSNLISKNPFAAYTNPTPIQS). The region spanning 210–394 (WPFSLSGRDV…ESYMINPAQV (185 aa)) is the Helicase ATP-binding domain. Residue 223–230 (AETGSGKT) coordinates ATP. The short motif at 340–343 (DEAD) is the DEAD box element. Residues 435–584 (RLYELLKEAQ…PVPEELLKFG (150 aa)) form the Helicase C-terminal domain.

It belongs to the DEAD box helicase family. DDX5/DBP2 subfamily.

It localises to the nucleus. The protein localises to the nucleolus. The enzyme catalyses ATP + H2O = ADP + phosphate + H(+). Functionally, ATP-dependent RNA helicase required for 60S ribosomal subunit synthesis. Involved in efficient pre-rRNA processing, predominantly at site A3, which is necessary for the normal formation of 25S and 5.8S rRNAs. The sequence is that of ATP-dependent RNA helicase dbp-3 (dbp-3) from Neurospora crassa (strain ATCC 24698 / 74-OR23-1A / CBS 708.71 / DSM 1257 / FGSC 987).